Reading from the N-terminus, the 154-residue chain is Troponin C, isoform 1 (154 aa).

4 EF-hand domains span residues 8 to 43, 44 to 79, 84 to 119, and 120 to 154; these read EQTA…LGHQ, LDDA…FLVE, AMMA…LDDK, and LTND…GGDD. Ca(2+)-binding residues include Asp57, Asp59, Ser61, Gln63, and Glu68. Ca(2+) contacts are provided by Asp133, Asp135, Ser137, Thr139, and Glu144.

This sequence belongs to the troponin C family. In terms of tissue distribution, present only in adult muscles.

This is Troponin C, isoform 1 (TpnC41C) from Drosophila melanogaster (Fruit fly).